Reading from the N-terminus, the 149-residue chain is Calmodulin-1 (149 aa).

Residue alanine 2 is modified to N-acetylalanine. 4 EF-hand domains span residues 8–43, 44–79, 81–116, and 117–149; these read DQISEFKEAFSLFDKDGDGCITTKELGTVMRSLGQN, PTEAELQDMINEVDADGNGTIDFPEFLNLMARKMKD, DSEEELKEAFRVFDKDQNGFISAAELRHVMTNLGEK, and LTDEEVDEMIREADVDGDGQINYEEFVKVMMAK. Ca(2+)-binding residues include aspartate 21, aspartate 23, aspartate 25, cysteine 27, glutamate 32, aspartate 57, aspartate 59, asparagine 61, threonine 63, glutamate 68, aspartate 94, aspartate 96, asparagine 98, and glutamate 105. At lysine 116 the chain carries N6,N6,N6-trimethyllysine. Positions 130, 132, 134, 136, and 141 each coordinate Ca(2+).

The protein belongs to the calmodulin family.

Its function is as follows. Calmodulin mediates the control of a large number of enzymes, ion channels and other proteins by Ca(2+). Among the enzymes to be stimulated by the calmodulin-Ca(2+) complex are a number of protein kinases and phosphatases. The protein is Calmodulin-1 (CAM81) of Petunia hybrida (Petunia).